A 170-amino-acid polypeptide reads, in one-letter code: Protein SprT (170 aa).

The SprT-like domain occupies 22–163 (LQQANLTLQT…RCRRCGKTLR (142 aa)). His78 provides a ligand contact to Zn(2+). Glu79 is a catalytic residue. His82 lines the Zn(2+) pocket.

It belongs to the SprT family. The cofactor is Zn(2+).

Its subcellular location is the cytoplasm. This chain is Protein SprT, found in Pectobacterium atrosepticum (strain SCRI 1043 / ATCC BAA-672) (Erwinia carotovora subsp. atroseptica).